A 237-amino-acid chain; its full sequence is Sugar fermentation stimulation protein homolog (237 aa).

This sequence belongs to the SfsA family.

The sequence is that of Sugar fermentation stimulation protein homolog from Methylobacterium radiotolerans (strain ATCC 27329 / DSM 1819 / JCM 2831 / NBRC 15690 / NCIMB 10815 / 0-1).